The primary structure comprises 522 residues: Lysine--tRNA ligase (522 aa).

Residues 44–52 carry the 'HIGH' region motif; the sequence is PSGLPHIGT. The 'KMSKS' region signature appears at 290–294; that stretch reads KISKS. Residue Lys-293 participates in ATP binding.

This sequence belongs to the class-I aminoacyl-tRNA synthetase family.

Its subcellular location is the cytoplasm. The enzyme catalyses tRNA(Lys) + L-lysine + ATP = L-lysyl-tRNA(Lys) + AMP + diphosphate. The chain is Lysine--tRNA ligase from Rickettsia bellii (strain RML369-C).